We begin with the raw amino-acid sequence, 218 residues long: N-(5'-phosphoribosyl)anthranilate isomerase (218 aa).

This sequence belongs to the TrpF family.

It catalyses the reaction N-(5-phospho-beta-D-ribosyl)anthranilate = 1-(2-carboxyphenylamino)-1-deoxy-D-ribulose 5-phosphate. The protein operates within amino-acid biosynthesis; L-tryptophan biosynthesis; L-tryptophan from chorismate: step 3/5. The protein is N-(5'-phosphoribosyl)anthranilate isomerase of Bordetella bronchiseptica (strain ATCC BAA-588 / NCTC 13252 / RB50) (Alcaligenes bronchisepticus).